Reading from the N-terminus, the 92-residue chain is MLCSIYKSPKKEGTYLYIPKRDDFSQVPDTLKQMFGKPIFVMLVNLEQRRLAQVNVEKVKQSMQEQGFFLQLPPPPENLLEQHKERKARQTP.

Residues 1 to 84 (MLCSIYKSPK…PPENLLEQHK (84 aa)) form the YcgL domain. Positions 69-92 (FLQLPPPPENLLEQHKERKARQTP) are disordered.

The polypeptide is YcgL domain-containing protein VC_1957 (Vibrio cholerae serotype O1 (strain ATCC 39315 / El Tor Inaba N16961)).